An 88-amino-acid polypeptide reads, in one-letter code: uncharacterized protein (88 aa).

This is an uncharacterized protein from Escherichia coli O157:H7.